A 347-amino-acid chain; its full sequence is NADH-quinone oxidoreductase subunit H (347 aa).

The next 8 helical transmembrane spans lie at 14-34 (IMIG…AYIL), 82-102 (AVFL…WAVI), 115-135 (VGIL…IMGG), 161-181 (IGFV…TDIV), 198-218 (LLDW…ISAL), 258-278 (AIVL…LPPL), 285-305 (WVPG…MFGI), and 321-341 (LGWK…AFVL).

It belongs to the complex I subunit 1 family. NDH-1 is composed of 14 different subunits. Subunits NuoA, H, J, K, L, M, N constitute the membrane sector of the complex.

It is found in the cell inner membrane. It catalyses the reaction a quinone + NADH + 5 H(+)(in) = a quinol + NAD(+) + 4 H(+)(out). Functionally, NDH-1 shuttles electrons from NADH, via FMN and iron-sulfur (Fe-S) centers, to quinones in the respiratory chain. The immediate electron acceptor for the enzyme in this species is believed to be ubiquinone. Couples the redox reaction to proton translocation (for every two electrons transferred, four hydrogen ions are translocated across the cytoplasmic membrane), and thus conserves the redox energy in a proton gradient. This subunit may bind ubiquinone. In Allorhizobium ampelinum (strain ATCC BAA-846 / DSM 112012 / S4) (Agrobacterium vitis (strain S4)), this protein is NADH-quinone oxidoreductase subunit H.